Here is a 341-residue protein sequence, read N- to C-terminus: N-acetyl-gamma-glutamyl-phosphate reductase (341 aa).

Residue Cys147 is part of the active site.

The protein belongs to the NAGSA dehydrogenase family. Type 1 subfamily.

It localises to the cytoplasm. It carries out the reaction N-acetyl-L-glutamate 5-semialdehyde + phosphate + NADP(+) = N-acetyl-L-glutamyl 5-phosphate + NADPH + H(+). The protein operates within amino-acid biosynthesis; L-arginine biosynthesis; N(2)-acetyl-L-ornithine from L-glutamate: step 3/4. Functionally, catalyzes the NADPH-dependent reduction of N-acetyl-5-glutamyl phosphate to yield N-acetyl-L-glutamate 5-semialdehyde. The chain is N-acetyl-gamma-glutamyl-phosphate reductase from Dehalococcoides mccartyi (strain ATCC BAA-2100 / JCM 16839 / KCTC 5957 / BAV1).